We begin with the raw amino-acid sequence, 200 residues long: A-type ATP synthase subunit E (200 aa).

Belongs to the V-ATPase E subunit family. As to quaternary structure, has multiple subunits with at least A(3), B(3), C, D, E, F, H, I and proteolipid K(x).

Its subcellular location is the cell membrane. In terms of biological role, component of the A-type ATP synthase that produces ATP from ADP in the presence of a proton gradient across the membrane. This is A-type ATP synthase subunit E from Methanopyrus kandleri (strain AV19 / DSM 6324 / JCM 9639 / NBRC 100938).